The sequence spans 211 residues: uncharacterized protein (211 aa).

The disordered stretch occupies residues 187–211 (LKVSEQENSEAPVSEPKEDEKTKKD). Positions 201–211 (EPKEDEKTKKD) are enriched in basic and acidic residues.

This is an uncharacterized protein from Spiroplasma citri.